We begin with the raw amino-acid sequence, 1136 residues long: MAKMEVKTSLLDNMIGVGDMVLLEPLNEETFINNLKKRFDHSEIYTYIGSVVISVNPYRSLPIYSPEKVEEYRNRNFYELSPHIFALSDEAYRSLRDQDKDQCILITGESGAGKTEASKLVMSYVAAVCGKGAEVNQVKEQLLQSNPVLEAFGNAKTVRNDNSSRFGKYMDIEFDFKGDPLGGVISNYLLEKSRVVKQPRGERNFHVFYQLLSGASEELLNKLKLERDFSRYNYLSLDSAKVNGVDDAANFRTVRNAMQIVGFMDHEAESVLAVVAAVLKLGNIEFKPESRVNGLDESKIKDKNELKEICELTGIDQSVLERAFSFRTVEAKQEKVSTTLNVAQAYYARDALAKNLYSRLFSWLVNRINESIKAQTKVRKKVMGVLDIYGFEIFEDNSFEQFIINYCNEKLQQIFIELTLKEEQEEYIREDIEWTHIDYFNNAIICDLIENNTNGILAMLDEECLRPGTVTDETFLEKLNQVCATHQHFESRMSKCSRFLNDTSLPHSCFRIQHYAGKVLYQVEGFVDKNNDLLYRDLSQAMWKASHALIKSLFPEGNPAKINLKRPPTAGSQFKASVATLMKNLQTKNPNYIRCIKPNDKKAAHIFNEALVCHQIRYLGLLENVRVRRAGYAFRQAYEPCLERYKMLCKQTWPHWKGPARSGVEVLFNELEIPVEEYSFGRSKIFIRNPRTLFKLEDLRKQRLEDLATLIQKIYRGWKCRTHFLLMKKSQIVIAAWYRRYAQQKRYQQTKSSALVIQSYIRGWKARKILRELKHQKRCKEAVTTIAAYWHGTQARRELRRLKEEARNKHAIAVIWAYWLGSKARRELKRLKEEARRKHAVAVIWAYWLGLKVRREYRKFFRANAGKKIYEFTLQRIVQKYFLEMKNKMPSLSPIDKNWPSRPYLFLDSTHKELKRIFHLWRCKKYRDQFTDQQKLIYEEKLEASELFKDKKALYPSSVGQPFQGAYLEINKNPKYKKLKDAIEEKIIIAEVVNKINRANGKSTSRIFLLTNNNLLLADQKSGQIKSEVPLVDVTKVSMSSQNDGFFAVHLKEGSEAASKGDFLFSSDHLIEMATKLYRTTLSQTKQKLNIEISDEFLVQFRQDKVCVKFIQGNQKNGSVPTCKRKNNRLLEVAVP.

The region spanning 15–701 (IGVGDMVLLE…TLFKLEDLRK (687 aa)) is the Myosin motor domain. At Ser-60 the chain carries Phosphoserine. ATP is bound at residue 108 to 115 (GESGAGKT). Lys-287 participates in a covalent cross-link: Glycyl lysine isopeptide (Lys-Gly) (interchain with G-Cter in SUMO1); alternate. Lys-287 is covalently cross-linked (Glycyl lysine isopeptide (Lys-Gly) (interchain with G-Cter in SUMO2); alternate). The tract at residues 578–600 (VATLMKNLQTKNPNYIRCIKPND) is actin-binding. IQ domains are found at residues 704–733 (LEDL…SQIV), 728–748 (KKSQ…KRYQ), 750–779 (TKSS…QKRC), 779–808 (CKEA…EARN), 808–837 (NKHA…EARR), and 837–866 (RKHA…ANAG). Positions 952-1136 (KALYPSSVGQ…NNRLLEVAVP (185 aa)) constitute a TH1 domain.

It belongs to the TRAFAC class myosin-kinesin ATPase superfamily. Myosin family.

Its function is as follows. Motor protein that may participate in process critical to neuronal development and function such as cell migration, neurite outgrowth and vesicular transport. The polypeptide is Unconventional myosin-Ib (MYO1B) (Homo sapiens (Human)).